The primary structure comprises 197 residues: Orotate phosphoribosyltransferase (197 aa).

5-phospho-alpha-D-ribose 1-diphosphate contacts are provided by residues Arg87, Lys91, His93, and 112 to 120 (DDVATTGGS). 2 residues coordinate orotate: Thr116 and Arg144.

It belongs to the purine/pyrimidine phosphoribosyltransferase family. PyrE subfamily. Homodimer. It depends on Mg(2+) as a cofactor.

The enzyme catalyses orotidine 5'-phosphate + diphosphate = orotate + 5-phospho-alpha-D-ribose 1-diphosphate. The protein operates within pyrimidine metabolism; UMP biosynthesis via de novo pathway; UMP from orotate: step 1/2. Its function is as follows. Catalyzes the transfer of a ribosyl phosphate group from 5-phosphoribose 1-diphosphate to orotate, leading to the formation of orotidine monophosphate (OMP). This chain is Orotate phosphoribosyltransferase, found in Sulfolobus acidocaldarius (strain ATCC 33909 / DSM 639 / JCM 8929 / NBRC 15157 / NCIMB 11770).